The following is a 927-amino-acid chain: MDHRAQAREVFVRAQLEAVQKAITKNEVPLKPKHARTIIVGTHKEKSSGIFWHTVGRIQLEKHPVLTWKFCHLVHKLLRDGHRKVPEETYRYVNRFTQLSQFWKHLNTSGYGPCIESYCKLLHDRVTFHNKYPVVPGKLDLNDSQLKTLEGDLDNMFEMTIDMLDQMDALLVLQDRVYEMMNSLRWNSLIPQGQCMLSPLIIAILDTSKFYDYLVKMIFKLHSQVPPDALEGHRSRFRTIFERTKKFYEESSNLQYFKYLVSIPTLPSHAPNFLQQSDLESYRTPHAYLHSEGSEDGTSLNGHDGELLNLAEAEPQQASPSSQPDPREEQIVMLSRAVEDEKFAKERLIQEARSRIEQYENRLLQMQGEFDHAKREADENREEAQRLKNELALRDASRTQTDDARVKEAELKATAAEERFNKMKGVYEKFRSEHVLALTKLGDIQKQLEASEKSKFDKDEEITALNRKVEEAQREAGRALTKAEGDAGAVDEMRTQLVKADIEVEELKRTIDHLRESHANQLVQSSAEETNKIRLAELEVAKESGVGITQMFDHCEDALQNATSITYPPHLAQSAMNNLVNILSNERLDEPLATKDNVFAGHLLSTTLSAAASAAYTASIESYEGVNDQCKKVLAAAKVAFSDDSALSRADKMKLLRQDIQTLNSLMISLPLQTDIDKDVVGNELEQEMRRMDDAIRRAVQEIEAIQRRARESSDGIRLEVNESILANCQALMSVIMQLVIASRELQTEIVAAGKAGGSPAEFYKRNHQWTEGLLSAAKAVGVAARVLVESADGVVTGKGKFEHLIVAAQEIAASTAQLFVSSRVKADKDSSKLDALSVAAKAVNQNTAQVVAAVKNGQTTLNDEGSLDFSYLSLHAAKKEEMESQVKMLELEQSLNQERAKLAALRKQHYHMAQLVANKEGEEAQE.

Residues 7–136 (AREVFVRAQL…TFHNKYPVVP (130 aa)) enclose the ENTH domain. Residues 336 to 524 (RAVEDEKFAK…RESHANQLVQ (189 aa)) adopt a coiled-coil conformation. The region spanning 673–914 (QTDIDKDVVG…ALRKQHYHMA (242 aa)) is the I/LWEQ domain.

This sequence belongs to the SLA2 family.

The protein resides in the cytoplasm. The protein localises to the cytoskeleton. Regulates pre-synaptic vesicle recycling at neuromuscular junctions of mechanosensory neurons. Plays a role in maintaining a normal defecation cycle. This Caenorhabditis elegans protein is Huntington interacting protein related 1 (hipr-1).